Here is a 189-residue protein sequence, read N- to C-terminus: Translation machinery-associated protein 22 (189 aa).

The SUI1 domain occupies 94–165 (VTIKRIERNK…EAKDYIEKLL (72 aa)).

This sequence belongs to the DENR family. Interacts with the 40S ribosomal subunit.

It localises to the cytoplasm. The chain is Translation machinery-associated protein 22 (TMA22) from Debaryomyces hansenii (strain ATCC 36239 / CBS 767 / BCRC 21394 / JCM 1990 / NBRC 0083 / IGC 2968) (Yeast).